The following is a 174-amino-acid chain: Crossover junction endodeoxyribonuclease RuvC (174 aa).

Active-site residues include Asp8, Glu67, and Asp139. The Mg(2+) site is built by Asp8, Glu67, and Asp139.

The protein belongs to the RuvC family. As to quaternary structure, homodimer which binds Holliday junction (HJ) DNA. The HJ becomes 2-fold symmetrical on binding to RuvC with unstacked arms; it has a different conformation from HJ DNA in complex with RuvA. In the full resolvosome a probable DNA-RuvA(4)-RuvB(12)-RuvC(2) complex forms which resolves the HJ. Requires Mg(2+) as cofactor.

Its subcellular location is the cytoplasm. The catalysed reaction is Endonucleolytic cleavage at a junction such as a reciprocal single-stranded crossover between two homologous DNA duplexes (Holliday junction).. Functionally, the RuvA-RuvB-RuvC complex processes Holliday junction (HJ) DNA during genetic recombination and DNA repair. Endonuclease that resolves HJ intermediates. Cleaves cruciform DNA by making single-stranded nicks across the HJ at symmetrical positions within the homologous arms, yielding a 5'-phosphate and a 3'-hydroxyl group; requires a central core of homology in the junction. The consensus cleavage sequence is 5'-(A/T)TT(C/G)-3'. Cleavage occurs on the 3'-side of the TT dinucleotide at the point of strand exchange. HJ branch migration catalyzed by RuvA-RuvB allows RuvC to scan DNA until it finds its consensus sequence, where it cleaves and resolves the cruciform DNA. The protein is Crossover junction endodeoxyribonuclease RuvC of Pseudomonas putida (strain W619).